We begin with the raw amino-acid sequence, 162 residues long: Ribosomal RNA large subunit methyltransferase H (162 aa).

An S-adenosyl-L-methionine-binding site is contributed by glycine 108.

Belongs to the RNA methyltransferase RlmH family. In terms of assembly, homodimer.

The protein localises to the cytoplasm. It catalyses the reaction pseudouridine(1915) in 23S rRNA + S-adenosyl-L-methionine = N(3)-methylpseudouridine(1915) in 23S rRNA + S-adenosyl-L-homocysteine + H(+). In terms of biological role, specifically methylates the pseudouridine at position 1915 (m3Psi1915) in 23S rRNA. The chain is Ribosomal RNA large subunit methyltransferase H from Methylobacterium nodulans (strain LMG 21967 / CNCM I-2342 / ORS 2060).